Reading from the N-terminus, the 730-residue chain is Hepatocyte growth factor (730 aa).

Positions 1-31 are cleaved as a signal peptide; the sequence is MWVTRLLPVLLLQHVLLHLLLLPIAIPYAEG. Residue glutamine 32 is modified to Pyrrolidone carboxylic acid. The region spanning 37–123 is the PAN domain; the sequence is NTLHEFKRSA…HEFDLYENKD (87 aa). Intrachain disulfides connect cysteine 70/cysteine 96, cysteine 74/cysteine 84, cysteine 128/cysteine 206, cysteine 149/cysteine 189, cysteine 177/cysteine 201, cysteine 211/cysteine 288, cysteine 232/cysteine 271, and cysteine 260/cysteine 283. Kringle domains lie at 128–206 and 211–288; these read CIIG…IPQC and CMTC…IKMC. Residue asparagine 294 is glycosylated (N-linked (GlcNAc...) asparagine). Disulfide bonds link cysteine 305/cysteine 383, cysteine 326/cysteine 365, cysteine 354/cysteine 377, cysteine 391/cysteine 469, cysteine 412/cysteine 452, cysteine 440/cysteine 464, cysteine 487/cysteine 606, cysteine 519/cysteine 535, cysteine 614/cysteine 681, cysteine 644/cysteine 660, and cysteine 671/cysteine 699. Kringle domains follow at residues 305-383 and 391-469; these read CIQG…IPKC and CYRG…ISRC. In terms of domain architecture, Peptidase S1 spans 495–723; that stretch reads VVNGIPTRTN…YAKWIHKIIL (229 aa). 2 N-linked (GlcNAc...) asparagine glycosylation sites follow: asparagine 568 and asparagine 655.

This sequence belongs to the peptidase S1 family. Plasminogen subfamily. Dimer of an alpha chain and a beta chain linked by a disulfide bond. Interacts with SRPX2; the interaction increases HGF mitogenic activity. The single-chain precursor undergoes proteolytic processing by TMPRSS13 resulting in an active two-chain form. The single-chain precursor undergoes proteolytic processing by HGFAC resulting in an active two-chain form.

Potent mitogen for mature parenchymal hepatocyte cells, seems to be a hepatotrophic factor, and acts as a growth factor for a broad spectrum of tissues and cell types. Activating ligand for the receptor tyrosine kinase MET by binding to it and promoting its dimerization. Activates MAPK signaling following TMPRSS13 cleavage and activation. The chain is Hepatocyte growth factor (HGF) from Bos taurus (Bovine).